The following is a 163-amino-acid chain: MASLSGSISSLFLKEFVGAFFLSMRYFFRQKATINYPFEKGPVSPRFRGEHALRRYPNGEERCIACKLCEAICPAQAITIEAGPRRNDGTRRTVRYDIDMVKCIYCGFCQEACPVDAIVEGPNFEFATETREELYFDKARLLDNGDRWEREIARNIAIDSPYR.

4Fe-4S ferredoxin-type domains follow at residues leucine 53–glycine 83 and valine 94–asparagine 123. The [4Fe-4S] cluster site is built by cysteine 63, cysteine 66, cysteine 69, cysteine 73, cysteine 103, cysteine 106, cysteine 109, and cysteine 113.

It belongs to the complex I 23 kDa subunit family. NDH-1 is composed of 14 different subunits. Subunits NuoA, H, J, K, L, M, N constitute the membrane sector of the complex. It depends on [4Fe-4S] cluster as a cofactor.

Its subcellular location is the cell inner membrane. It carries out the reaction a quinone + NADH + 5 H(+)(in) = a quinol + NAD(+) + 4 H(+)(out). NDH-1 shuttles electrons from NADH, via FMN and iron-sulfur (Fe-S) centers, to quinones in the respiratory chain. The immediate electron acceptor for the enzyme in this species is believed to be ubiquinone. Couples the redox reaction to proton translocation (for every two electrons transferred, four hydrogen ions are translocated across the cytoplasmic membrane), and thus conserves the redox energy in a proton gradient. This Rhizobium johnstonii (strain DSM 114642 / LMG 32736 / 3841) (Rhizobium leguminosarum bv. viciae) protein is NADH-quinone oxidoreductase subunit I.